Here is a 683-residue protein sequence, read N- to C-terminus: Boron transporter 4 (683 aa).

At 1 to 38 the chain is on the cytoplasmic side; the sequence is MEEERVDSSKRLFRGIVADLRGRALCYKEDWVAGLRSG. A helical transmembrane segment spans residues 39–59; that stretch reads FGILAPTTYIFFASALPVIAF. The Extracellular segment spans residues 60 to 80; it reads GEQLSRDTEGALSTVETLAST. Residues 81–101 traverse the membrane as a helical segment; that stretch reads ALCGVIHSILGGQPLLILGVA. At 102-126 the chain is on the cytoplasmic side; that stretch reads EPTVLMYVYLYNFAIGRPELGKQLY. A helical transmembrane segment spans residues 127–147; sequence LAWAAWVCVWTALLLFVMAIL. Over 148 to 160 the chain is Extracellular; that stretch reads NTADIINRFTRVA. A helical transmembrane segment spans residues 161–181; sequence GELFGMLISVLFIQQAIKGMV. The Cytoplasmic segment spans residues 182 to 200; sequence SEFGMPKDEDSKLEKYKFE. Residues 201–221 form a helical membrane-spanning segment; that stretch reads WLYTNGLLGLIFTFGLLYTAL. Residues 222–238 lie on the Extracellular side of the membrane; it reads KSRKARSWRYGTGWYRS. The helical transmembrane segment at 239-259 threads the bilayer; that stretch reads FIADYGVPLMVVVWTALSFST. The Cytoplasmic portion of the chain corresponds to 260–294; it reads PSKLPSGVPRRLFSPLPWDSPSLSHWTVIKDMGKV. The chain crosses the membrane as a helical span at residues 295–315; the sequence is SPGYIFAAFIPALMIAGLYFF. Residues 316–335 are Extracellular-facing; that stretch reads DHSVASQLAQQKEFNLKKPS. Residues 336-356 form a helical membrane-spanning segment; that stretch reads AYHYDILLLGFMTLICGLLGL. At 357–477 the chain is on the cytoplasmic side; the sequence is PPSNGVLPQS…EQRVSNLLQS (121 aa). Residues 478–498 form a helical membrane-spanning segment; sequence LLVAGAVLAMPAIKLIPTSIL. Residues 499 to 565 lie on the Extracellular side of the membrane; that stretch reads WGYFAYMAID…QIFYFGLCYG (67 aa). A helical transmembrane segment spans residues 566 to 586; it reads VTWIPVAGIMFPVPFFLLIAI. The Cytoplasmic segment spans residues 587 to 683; it reads RQYILPKLFN…GDGDMSTTRE (97 aa). Disordered regions lie at residues 617–638 and 661–683; these read NPLE…GDAE and KGNQ…TTRE.

This sequence belongs to the anion exchanger (TC 2.A.31.3) family. In terms of tissue distribution, expressed in the distal sides of epidermal cells in the elongation zone of roots.

The protein resides in the membrane. Efflux-type boron transporter polarly localized in roots. Boron is essential for maintaining the integrity of plants cell walls. The protein is Boron transporter 4 (BOR4) of Arabidopsis thaliana (Mouse-ear cress).